Consider the following 669-residue polypeptide: UvrABC system protein C (669 aa).

The region spanning D14 to I91 is the GIY-YIG domain. One can recognise a UVR domain in the interval K196 to L231. The disordered stretch occupies residues P647–S669. Positions H648–K658 are enriched in basic and acidic residues.

The protein belongs to the UvrC family. As to quaternary structure, interacts with UvrB in an incision complex.

The protein localises to the cytoplasm. The UvrABC repair system catalyzes the recognition and processing of DNA lesions. UvrC both incises the 5' and 3' sides of the lesion. The N-terminal half is responsible for the 3' incision and the C-terminal half is responsible for the 5' incision. The protein is UvrABC system protein C of Lactococcus lactis subsp. cremoris (strain MG1363).